The primary structure comprises 446 residues: N-succinylarginine dihydrolase (446 aa).

Substrate is bound by residues 19–28 (AGLSFGNVAS), N110, and 137–138 (HR). E174 is an active-site residue. R213 serves as a coordination point for substrate. H249 is a catalytic residue. Positions 251 and 364 each coordinate substrate. The active-site Nucleophile is C370.

Belongs to the succinylarginine dihydrolase family. As to quaternary structure, homodimer.

The enzyme catalyses N(2)-succinyl-L-arginine + 2 H2O + 2 H(+) = N(2)-succinyl-L-ornithine + 2 NH4(+) + CO2. The protein operates within amino-acid degradation; L-arginine degradation via AST pathway; L-glutamate and succinate from L-arginine: step 2/5. Catalyzes the hydrolysis of N(2)-succinylarginine into N(2)-succinylornithine, ammonia and CO(2). The chain is N-succinylarginine dihydrolase from Paraburkholderia xenovorans (strain LB400).